Consider the following 596-residue polypeptide: Elongation factor 4 (596 aa).

The tr-type G domain maps to 2–184; the sequence is KHIRNFSIIA…VIVEQIPPPE (183 aa). GTP-binding positions include 14–19 and 131–134; these read DHGKST and NKID.

This sequence belongs to the TRAFAC class translation factor GTPase superfamily. Classic translation factor GTPase family. LepA subfamily.

It localises to the cell inner membrane. The enzyme catalyses GTP + H2O = GDP + phosphate + H(+). In terms of biological role, required for accurate and efficient protein synthesis under certain stress conditions. May act as a fidelity factor of the translation reaction, by catalyzing a one-codon backward translocation of tRNAs on improperly translocated ribosomes. Back-translocation proceeds from a post-translocation (POST) complex to a pre-translocation (PRE) complex, thus giving elongation factor G a second chance to translocate the tRNAs correctly. Binds to ribosomes in a GTP-dependent manner. The chain is Elongation factor 4 from Shewanella pealeana (strain ATCC 700345 / ANG-SQ1).